The primary structure comprises 235 residues: Large ribosomal subunit protein uL1 (235 aa).

This sequence belongs to the universal ribosomal protein uL1 family. As to quaternary structure, part of the 50S ribosomal subunit.

In terms of biological role, binds directly to 23S rRNA. The L1 stalk is quite mobile in the ribosome, and is involved in E site tRNA release. Protein L1 is also a translational repressor protein, it controls the translation of the L11 operon by binding to its mRNA. This chain is Large ribosomal subunit protein uL1, found in Prochlorococcus marinus (strain NATL1A).